A 435-amino-acid polypeptide reads, in one-letter code: Gamma-glutamyl phosphate reductase (435 aa).

Belongs to the gamma-glutamyl phosphate reductase family.

It is found in the cytoplasm. The catalysed reaction is L-glutamate 5-semialdehyde + phosphate + NADP(+) = L-glutamyl 5-phosphate + NADPH + H(+). Its pathway is amino-acid biosynthesis; L-proline biosynthesis; L-glutamate 5-semialdehyde from L-glutamate: step 2/2. Functionally, catalyzes the NADPH-dependent reduction of L-glutamate 5-phosphate into L-glutamate 5-semialdehyde and phosphate. The product spontaneously undergoes cyclization to form 1-pyrroline-5-carboxylate. In Synechococcus sp. (strain CC9605), this protein is Gamma-glutamyl phosphate reductase.